Here is a 429-residue protein sequence, read N- to C-terminus: Light-independent protochlorophyllide reductase subunit N (429 aa).

Residues Cys-32, Cys-57, and Cys-118 each coordinate [4Fe-4S] cluster.

It belongs to the BchN/ChlN family. Protochlorophyllide reductase is composed of three subunits; BchL, BchN and BchB. Forms a heterotetramer of two BchB and two BchN subunits. [4Fe-4S] cluster is required as a cofactor.

The enzyme catalyses chlorophyllide a + oxidized 2[4Fe-4S]-[ferredoxin] + 2 ADP + 2 phosphate = protochlorophyllide a + reduced 2[4Fe-4S]-[ferredoxin] + 2 ATP + 2 H2O. It participates in porphyrin-containing compound metabolism; bacteriochlorophyll biosynthesis (light-independent). Its function is as follows. Component of the dark-operative protochlorophyllide reductase (DPOR) that uses Mg-ATP and reduced ferredoxin to reduce ring D of protochlorophyllide (Pchlide) to form chlorophyllide a (Chlide). This reaction is light-independent. The NB-protein (BchN-BchB) is the catalytic component of the complex. The chain is Light-independent protochlorophyllide reductase subunit N from Rhodopseudomonas palustris (strain ATCC BAA-98 / CGA009).